Reading from the N-terminus, the 37-residue chain is Large ribosomal subunit protein bL36 (37 aa).

Belongs to the bacterial ribosomal protein bL36 family.

This chain is Large ribosomal subunit protein bL36, found in Bacillus pumilus (strain SAFR-032).